A 358-amino-acid chain; its full sequence is Malate dehydrogenase 2, glyoxysomal (358 aa).

The transit peptide at 1-38 directs the protein to the glyoxysome; that stretch reads MEFRGDANKRIAMISAHLQPSFTPQMEAKNSVMGRENC. NAD(+) is bound by residues 53–59 and Asp-79; that span reads GAAGGIG. Positions 126 and 132 each coordinate substrate. NAD(+) is bound by residues Asn-139 and 162-164; that span reads ISN. Substrate contacts are provided by Asn-164 and Arg-198. His-222 serves as the catalytic Proton acceptor. Met-273 serves as a coordination point for NAD(+).

Belongs to the LDH/MDH superfamily. MDH type 1 family. Homodimer.

It localises to the glyoxysome. It catalyses the reaction (S)-malate + NAD(+) = oxaloacetate + NADH + H(+). This is Malate dehydrogenase 2, glyoxysomal (MDH2) from Brassica napus (Rape).